Consider the following 107-residue polypeptide: Small ribosomal subunit protein uS17 (107 aa).

It belongs to the universal ribosomal protein uS17 family. Part of the 30S ribosomal subunit.

Its function is as follows. One of the primary rRNA binding proteins, it binds specifically to the 5'-end of 16S ribosomal RNA. The chain is Small ribosomal subunit protein uS17 from Thermotoga petrophila (strain ATCC BAA-488 / DSM 13995 / JCM 10881 / RKU-1).